The primary structure comprises 196 residues: MNTGNRIGIFGGSFDPIHTGHVLVSVYTLEILDLDRLIVVPVFNPPHKKTVAPFEKRFEWLKKVFEGMEKVEVSDYEKGRGGVSYSIFTIEYFSEIYKTKPFFIVGEDALSYFEKWYRYRDILEKSTLVVYPRYCGKPYHEHARRVLGDLSEIVFLDMPIVQISSTEIRERARIGKTLKGFVPEEIREEVEVFYGA.

The protein belongs to the NadD family.

It catalyses the reaction nicotinate beta-D-ribonucleotide + ATP + H(+) = deamido-NAD(+) + diphosphate. Its pathway is cofactor biosynthesis; NAD(+) biosynthesis; deamido-NAD(+) from nicotinate D-ribonucleotide: step 1/1. Its function is as follows. Catalyzes the reversible adenylation of nicotinate mononucleotide (NaMN) to nicotinic acid adenine dinucleotide (NaAD). The chain is Probable nicotinate-nucleotide adenylyltransferase from Thermotoga petrophila (strain ATCC BAA-488 / DSM 13995 / JCM 10881 / RKU-1).